The following is a 488-amino-acid chain: Probable glycine dehydrogenase (decarboxylating) subunit 2 (488 aa).

The residue at position 273 (Lys273) is an N6-(pyridoxal phosphate)lysine.

This sequence belongs to the GcvP family. C-terminal subunit subfamily. As to quaternary structure, the glycine cleavage system is composed of four proteins: P, T, L and H. In this organism, the P 'protein' is a heterodimer of two subunits. Requires pyridoxal 5'-phosphate as cofactor.

The catalysed reaction is N(6)-[(R)-lipoyl]-L-lysyl-[glycine-cleavage complex H protein] + glycine + H(+) = N(6)-[(R)-S(8)-aminomethyldihydrolipoyl]-L-lysyl-[glycine-cleavage complex H protein] + CO2. In terms of biological role, the glycine cleavage system catalyzes the degradation of glycine. The P protein binds the alpha-amino group of glycine through its pyridoxal phosphate cofactor; CO(2) is released and the remaining methylamine moiety is then transferred to the lipoamide cofactor of the H protein. The polypeptide is Probable glycine dehydrogenase (decarboxylating) subunit 2 (Halalkalibacterium halodurans (strain ATCC BAA-125 / DSM 18197 / FERM 7344 / JCM 9153 / C-125) (Bacillus halodurans)).